Reading from the N-terminus, the 118-residue chain is Large ribosomal subunit protein uL18 (118 aa).

It belongs to the universal ribosomal protein uL18 family. In terms of assembly, part of the 50S ribosomal subunit; part of the 5S rRNA/L5/L18/L25 subcomplex. Contacts the 5S and 23S rRNAs.

Its function is as follows. This is one of the proteins that bind and probably mediate the attachment of the 5S RNA into the large ribosomal subunit, where it forms part of the central protuberance. The chain is Large ribosomal subunit protein uL18 from Rickettsia typhi (strain ATCC VR-144 / Wilmington).